The sequence spans 296 residues: Putative ribose uptake protein RbsU (296 aa).

9 consecutive transmembrane segments (helical) span residues 2–24, 34–51, 58–80, 90–112, 121–139, 182–201, 221–240, 245–267, and 276–295; these read NGIA…TIAS, IIGT…YNLV, SGAA…ILTF, RAMP…FALG, LVGF…MTTW, AFLP…AVYL, IISG…SAQP, LATG…IWFL, and MVVT…MTVI.

The protein belongs to the GRP transporter (TC 2.A.7.5) family.

The protein localises to the cell membrane. Functionally, could be involved in the uptake of ribose. This chain is Putative ribose uptake protein RbsU (rbsU), found in Lactobacillus johnsonii (strain CNCM I-12250 / La1 / NCC 533).